Here is a 104-residue protein sequence, read N- to C-terminus: MAFTQALVTVLAFLVGTLPHKFDFSENSDLKKANGDKCVHHSQCFSDCCLIDLERSGAFCTSKSHVGMACLPQTKRSLNILCPCRIGLSCHSKDPMCPRRCQMI.

Residues 1-19 form the signal peptide; the sequence is MAFTQALVTVLAFLVGTLP. Cystine bridges form between C38-C49, C44-C60, C48-C82, C70-C90, and C84-C101.

It belongs to the colipase family.

The protein localises to the secreted. This chain is Colipase-like protein 2 (Clpsl2), found in Rattus norvegicus (Rat).